We begin with the raw amino-acid sequence, 1186 residues long: ATP-dependent helicase/deoxyribonuclease subunit B (1186 aa).

The protein belongs to the helicase family. AddB/RexB type 2 subfamily. As to quaternary structure, heterodimer of AddA and RexB. Mg(2+) serves as cofactor.

Its function is as follows. The heterodimer acts as both an ATP-dependent DNA helicase and an ATP-dependent, dual-direction single-stranded exonuclease. Recognizes the chi site generating a DNA molecule suitable for the initiation of homologous recombination. This subunit has 5' -&gt; 3' nuclease activity but not helicase activity. The protein is ATP-dependent helicase/deoxyribonuclease subunit B of Latilactobacillus sakei subsp. sakei (strain 23K) (Lactobacillus sakei subsp. sakei).